A 513-amino-acid chain; its full sequence is ATP synthase subunit alpha (513 aa).

169–176 (GDRQTGKT) is a binding site for ATP.

Belongs to the ATPase alpha/beta chains family. In terms of assembly, F-type ATPases have 2 components, CF(1) - the catalytic core - and CF(0) - the membrane proton channel. CF(1) has five subunits: alpha(3), beta(3), gamma(1), delta(1), epsilon(1). CF(0) has three main subunits: a(1), b(2) and c(9-12). The alpha and beta chains form an alternating ring which encloses part of the gamma chain. CF(1) is attached to CF(0) by a central stalk formed by the gamma and epsilon chains, while a peripheral stalk is formed by the delta and b chains.

Its subcellular location is the cell inner membrane. It catalyses the reaction ATP + H2O + 4 H(+)(in) = ADP + phosphate + 5 H(+)(out). Its function is as follows. Produces ATP from ADP in the presence of a proton gradient across the membrane. The alpha chain is a regulatory subunit. The chain is ATP synthase subunit alpha from Shewanella denitrificans (strain OS217 / ATCC BAA-1090 / DSM 15013).